The chain runs to 404 residues: Corticosteroid-binding globulin (404 aa).

Residues 1 to 22 form the signal peptide; it reads MLPTLYTCLLWLSTSGLWTVQA. 3 N-linked (GlcNAc...) asparagine glycosylation sites follow: Asn-95, Asn-119, and Asn-175. Position 253 (Gln-253) interacts with cortisol. Asn-259 carries N-linked (GlcNAc...) asparagine glycosylation. Gln-285 lines the cortisol pocket. N-linked (GlcNAc...) asparagine glycosylation occurs at Asn-326. Trp-392 is a cortisol binding site.

It belongs to the serpin family. In terms of processing, glycosylation in position Asn-259 is needed for steroid binding.

It is found in the secreted. In terms of biological role, major transport protein for glucocorticoids and progestins in the blood of almost all vertebrate species. This Bos taurus (Bovine) protein is Corticosteroid-binding globulin (SERPINA6).